The chain runs to 1192 residues: Leucine-rich repeat receptor protein kinase EMS1 (1192 aa).

The first 18 residues, 1 to 18, serve as a signal peptide directing secretion; it reads MAFLTALFLFLFFSFSSS. N-linked (GlcNAc...) asparagine glycosylation is present at N47. 28 LRR repeats span residues 64–87, 90–112, 114–137, 138–160, 163–185, 187–209, 235–257, 259–281, 283–304, 330–352, 354–376, 378–400, 402–425, 426–447, 449–471, 473–496, 497–520, 521–543, 545–567, 581–603, 605–628, 629–651, 653–675, 677–697, 701–723, 725–748, 749–772, and 773–795; these read LGRVNSLSLPSLSLRGQIPKEISS, NLRELCLAGNQFSGKIPPEIWNL, HLQTLDLSGNSLTGLLPRLLSELP, QLLYLDLSDNHFSGSLPPSFFIS, ALSSLDVSNNSLSGEIPPEIGKL, NLSNLYMGLNSFSGQIPSEIGNI, HLAKLDLSYNPLKCSIPKSFGEL, NLSILNLVSAELIGLIPPELGNC, SLKSLMLSFNSLSGPLPLELSE, VLDSLLLANNRFSGEIPHEIEDC, MLKHLSLASNLLSGSIPRELCGS, SLEAIDLSGNLLSGTIEEVFDGC, SLGELLLTNNQINGSIPEDLWKLP, LMALDLDSNNFTGEIPKSLWKS, NLMEFTASYNRLEGYLPAEIGNA, SLKRLVLSDNQLTGEIPREIGKLT, SLSVLNLNANMFQGKIPVELGDCT, SLTTLDLGSNNLQGQIPDKITAL, QLQCLVLSYNNLSGSIPSKPSAY, HHGIFDLSYNRLSGPIPEELGEC, VLVEISLSNNHLSGEIPASLSRLT, NLTILDLSGNALTGSIPKEMGNS, KLQGLNLANNQLNGHIPESFGLL, SLVKLNLTKNKLDGPVPASLG, ELTHMDLSFNNLSGELSSELSTM, KLVGLYIEQNKFTGEIPSELGNLT, QLEYLDVSENLLSGEIPTKICGLP, and NLEFLNLAKNNLRGEVPSDGVCQ. Residues N171, N187, and N208 are each glycosylated (N-linked (GlcNAc...) asparagine). The N-linked (GlcNAc...) asparagine glycan is linked to N259. N-linked (GlcNAc...) asparagine glycosylation is found at N414 and N435. Residue N555 is glycosylated (N-linked (GlcNAc...) asparagine). N-linked (GlcNAc...) asparagine glycosylation occurs at N629. 3 N-linked (GlcNAc...) asparagine glycosylation sites follow: N682, N711, and N746. The helical transmembrane segment at 828 to 848 threads the bilayer; sequence WGIAGLMLGFTIIVFVFVFSL. T914 bears the Phosphothreonine mark. In terms of domain architecture, Protein kinase spans 917–1192; sequence FSKKNIIGDG…LDVLKALKEI (276 aa). ATP contacts are provided by residues 923 to 931 and K945; that span reads IGDGGFGTV. Y990 carries the post-translational modification Phosphotyrosine. D1043 functions as the Proton acceptor in the catalytic mechanism. Phosphotyrosine is present on Y1085.

This sequence belongs to the protein kinase superfamily. Ser/Thr protein kinase family. In terms of assembly, interacts with TPD1. Autophosphorylates in vitro. As to expression, present in young buds, open flowers and siliques but absent from mature leaves and roots. Strongly expressed in the young organ primordia, and as the anthers and ovules developed, became focused in the microsporangia and in the distal and chalazal regions of the ovule. In cv. Landsberg erecta, only expressed in the anthers of young floral buds.

It localises to the cell membrane. It carries out the reaction L-seryl-[protein] + ATP = O-phospho-L-seryl-[protein] + ADP + H(+). The catalysed reaction is L-threonyl-[protein] + ATP = O-phospho-L-threonyl-[protein] + ADP + H(+). In terms of biological role, receptor with a serine/threonine-protein kinase activity required for the specification of the correct number of male archesporial initials and for the subsequent specification of tapetal and middle cell layer identities. In seeds, required for enhancing cell size and the rate of embryonic development. This Arabidopsis thaliana (Mouse-ear cress) protein is Leucine-rich repeat receptor protein kinase EMS1.